Consider the following 131-residue polypeptide: MEMGKWIHLELRNRTPSDVKELFLDNSQSNEGKLEGLTDEFEELELLNTINIGLTSIANLPKLNKLKKLELSSNRASVGLEVLAEKCPNLIHLNLSGNKIKDLSTIEPLKKLENLESLDLFTCEVTNLNNY.

LRR repeat units lie at residues 18–38, 43–64, 65–87, 89–110, and 114–131; these read DVKE…EGLT, ELEL…PKLN, KLKK…AEKC, NLIH…EPLK, and NLES…LNNY.

It belongs to the ANP32 family.

The sequence is that of Acidic leucine-rich nuclear phosphoprotein 32 family member D (ANP32D) from Homo sapiens (Human).